The sequence spans 424 residues: Dihydroorotase (424 aa).

Zn(2+)-binding residues include histidine 58 and histidine 60. Residues 60 to 62 and asparagine 92 each bind substrate; that span reads HLR. The Zn(2+) site is built by aspartate 150, histidine 177, and histidine 230. Substrate is bound at residue asparagine 276. Residue aspartate 303 participates in Zn(2+) binding. Aspartate 303 is a catalytic residue. Substrate is bound by residues histidine 307 and 321–322; that span reads FG.

It belongs to the metallo-dependent hydrolases superfamily. DHOase family. Class I DHOase subfamily. It depends on Zn(2+) as a cofactor.

It carries out the reaction (S)-dihydroorotate + H2O = N-carbamoyl-L-aspartate + H(+). It functions in the pathway pyrimidine metabolism; UMP biosynthesis via de novo pathway; (S)-dihydroorotate from bicarbonate: step 3/3. Functionally, catalyzes the reversible cyclization of carbamoyl aspartate to dihydroorotate. This is Dihydroorotase from Staphylococcus aureus (strain MRSA252).